Here is a 227-residue protein sequence, read N- to C-terminus: Transmembrane emp24 domain-containing protein 1 (227 aa).

The N-terminal stretch at 1–23 (MMAAGAALALALWLLMPPVEVGG) is a signal peptide. At 24-194 (AGPPPIQDGE…LQEGNLERVN (171 aa)) the chain is on the extracellular side. The region spanning 43 to 125 (KQCFYQSAPA…EKLVFFELIF (83 aa)) is the GOLD domain. Residues 145 to 170 (EMLDVKMEDIKESIETMRTRLERSIQ) adopt a coiled-coil conformation. The chain crosses the membrane as a helical span at residues 195–215 (FWSAVNVAVLLLVAVLQVCTL). Residues 216–227 (KRFFQDKRPVPT) are Cytoplasmic-facing. The COPII vesicle coat-binding signature appears at 218–219 (FF). Positions 218 to 227 (FFQDKRPVPT) match the COPI vesicle coat-binding motif.

It belongs to the EMP24/GP25L family. As to quaternary structure, homodimer in endoplasmic reticulum, endoplasmic reticulum-Golgi intermediate compartment and cis-Golgi network. Interacts with IL1RL1. Interacts with RNF26; this interaction is important to modulate innate immune signaling through the cGAS-STING pathway. As to expression, widely expressed.

Its subcellular location is the cell membrane. The protein resides in the endoplasmic reticulum membrane. The protein localises to the golgi apparatus. It is found in the cis-Golgi network membrane. It localises to the endoplasmic reticulum-Golgi intermediate compartment membrane. Potential role in vesicular protein trafficking, mainly in the early secretory pathway. May act as a cargo receptor at the lumenal side for incorporation of secretory cargo molecules into transport vesicles and may be involved in vesicle coat formation at the cytoplasmic side. Plays a positive role in IL-33-mediated IL-8 and IL-6 production by interacting with interleukin-33 receptor IL1RL1. Also plays a role in the modulation of innate immune signaling through the cGAS-STING pathway by interacting with RNF26. This chain is Transmembrane emp24 domain-containing protein 1 (TMED1), found in Homo sapiens (Human).